Consider the following 245-residue polypeptide: uncharacterized protein (245 aa).

Residues 1-20 (MIKQTIVALLLSVGASSVFA) form the signal peptide.

This sequence to E.coli YmcB.

This is an uncharacterized protein from Escherichia coli (strain K12).